We begin with the raw amino-acid sequence, 104 residues long: Nucleoid-associated protein Moth_0028 (104 aa).

Belongs to the YbaB/EbfC family. As to quaternary structure, homodimer.

It is found in the cytoplasm. The protein resides in the nucleoid. Functionally, binds to DNA and alters its conformation. May be involved in regulation of gene expression, nucleoid organization and DNA protection. This is Nucleoid-associated protein Moth_0028 from Moorella thermoacetica (strain ATCC 39073 / JCM 9320).